A 259-amino-acid polypeptide reads, in one-letter code: Thiazole synthase (259 aa).

The active-site Schiff-base intermediate with DXP is the Lys100. 1-deoxy-D-xylulose 5-phosphate contacts are provided by residues Gly161, 187–188, and 209–210; these read AG and AS.

This sequence belongs to the ThiG family. As to quaternary structure, homotetramer. Forms heterodimers with either ThiH or ThiS.

It is found in the cytoplasm. The enzyme catalyses [ThiS sulfur-carrier protein]-C-terminal-Gly-aminoethanethioate + 2-iminoacetate + 1-deoxy-D-xylulose 5-phosphate = [ThiS sulfur-carrier protein]-C-terminal Gly-Gly + 2-[(2R,5Z)-2-carboxy-4-methylthiazol-5(2H)-ylidene]ethyl phosphate + 2 H2O + H(+). It functions in the pathway cofactor biosynthesis; thiamine diphosphate biosynthesis. In terms of biological role, catalyzes the rearrangement of 1-deoxy-D-xylulose 5-phosphate (DXP) to produce the thiazole phosphate moiety of thiamine. Sulfur is provided by the thiocarboxylate moiety of the carrier protein ThiS. In vitro, sulfur can be provided by H(2)S. This Salinispora arenicola (strain CNS-205) protein is Thiazole synthase.